The primary structure comprises 1020 residues: MKCHNPFGFRVGPVTFWTIIIYLALLVPLLWIHETVPPAPSSPTPTPGINLTEAWHDLTTITKHYHPYNSRDNERVGDYILERIAAILDRNDVNWTLEKTGARNVDVTLELSSRSSSAPSVTVFDDNLANVTWATDIGMLGDHTAGVGTYFEGTNKLVYIRGTEDEQGEWWKSGKNDVRVIGKGGVLVNAHYDSVASGYGATDDGMGCVSILQILNYFTTQGRQPKRGLLLLFNNGEEDGLLGAKAFANSPLFSFPTTFVNLEGAGAGGRAVLFRSSDEQVTKAYQKAPHPFGLVVASDGFSMGLVKSQTDFVVWDDIFGQRGLDIAFYRPRPRYHTDQDDTRHASPASLWHMLSNSIAAVKSLSDNTHTFSGQRSDGDRRKVPSGSHASKGVWFDMFGKGFAVFGLRGLFAWSLTLLIVSPLILAILVFILNRHDKLYFFSRKINVHNEGSEDPVSIGGFRGFTRFPIAVGFSGALTLASAFLLTKINPMIVYSSEYAVWGMMLSLFYVSLWMTLKGSSAVRPSALQRGYIHIWLFIVSWGLLIVVAVTEDRLKIASGYPVVFLHSALFLSTVISFLELFGLTKKHDYARRAHDDHQVRDRIGELPHDDALIAPDTPNDEAEDSDGEDSEHEPTETTPLRAGGDSRVRSTFGTAYRSVFTRKSSPDKHKPFENEQPWSGRLPGWTWILQFLLLAPINVILWGQIGLFAVAATQAGGADGGSVLTTYLIIAVLSIVILVPLAPFIHRVHYYVPIILFAAFAGTLIYNLIAFPFSANNRYKIYFVQEIDVSDGSTKVSLTGLDKYVHSVIGELPSTSGKVITCTDSNARSGLVDCSYDGSAVPPLLHGGLENGTVTVTNKRYQHLVSVNITRSNDSKNRATLSINAADSKVCTVIFDQPVSNFAIRGSEGLDSRLGQYPDAGVGSLRLFRRDWTSPWVVDVEWNDQHKVGEVALETDKPVDKDAVEELRKRAGISGTIKCHYSDANVPETIPAFHECLQYSPDWAAFSKADVGLVRPVKRF.

Topologically, residues 1 to 11 are cytoplasmic; it reads MKCHNPFGFRV. A helical transmembrane segment spans residues 12–32; sequence GPVTFWTIIIYLALLVPLLWI. At 33–410 the chain is on the vacuolar side; the sequence is HETVPPAPSS…GFAVFGLRGL (378 aa). N-linked (GlcNAc...) asparagine glycosylation is found at Asn-50, Asn-94, and Asn-130. His-191 and Asp-203 together coordinate Zn(2+). Glu-237 serves as the catalytic Proton acceptor. Zn(2+) is bound by residues Glu-238, Glu-263, and His-336. A helical membrane pass occupies residues 411-431; sequence FAWSLTLLIVSPLILAILVFI. At 432–467 the chain is on the cytoplasmic side; the sequence is LNRHDKLYFFSRKINVHNEGSEDPVSIGGFRGFTRF. A helical transmembrane segment spans residues 468–488; it reads PIAVGFSGALTLASAFLLTKI. Over 489 to 491 the chain is Vacuolar; it reads NPM. A helical transmembrane segment spans residues 492–512; that stretch reads IVYSSEYAVWGMMLSLFYVSL. Residues 513–529 are Cytoplasmic-facing; it reads WMTLKGSSAVRPSALQR. Residues 530–550 traverse the membrane as a helical segment; that stretch reads GYIHIWLFIVSWGLLIVVAVT. Over 551-561 the chain is Vacuolar; it reads EDRLKIASGYP. Residues 562–582 form a helical membrane-spanning segment; the sequence is VVFLHSALFLSTVISFLELFG. Residues 583-690 are Cytoplasmic-facing; the sequence is LTKKHDYARR…RLPGWTWILQ (108 aa). The interval 609-648 is disordered; sequence DDALIAPDTPNDEAEDSDGEDSEHEPTETTPLRAGGDSRV. Residues 618–631 show a composition bias toward acidic residues; that stretch reads PNDEAEDSDGEDSE. A helical membrane pass occupies residues 691–711; it reads FLLLAPINVILWGQIGLFAVA. Residues 712–724 lie on the Vacuolar side of the membrane; it reads ATQAGGADGGSVL. The chain crosses the membrane as a helical span at residues 725 to 745; the sequence is TTYLIIAVLSIVILVPLAPFI. The Cytoplasmic portion of the chain corresponds to 746-750; sequence HRVHY. The chain crosses the membrane as a helical span at residues 751–771; that stretch reads YVPIILFAAFAGTLIYNLIAF. The Vacuolar segment spans residues 772-1020; it reads PFSANNRYKI…VGLVRPVKRF (249 aa). N-linked (GlcNAc...) asparagine glycans are attached at residues Asn-851, Asn-868, and Asn-873.

It belongs to the peptidase M28 family. Requires Zn(2+) as cofactor.

The protein localises to the vacuole membrane. In terms of biological role, may be involved in vacuolar sorting and osmoregulation. This is Vacuolar membrane protease from Verticillium alfalfae (strain VaMs.102 / ATCC MYA-4576 / FGSC 10136) (Verticillium wilt of alfalfa).